A 314-amino-acid chain; its full sequence is Ribonuclease Z (314 aa).

Zn(2+)-binding residues include histidine 61, histidine 63, aspartate 65, histidine 66, histidine 137, aspartate 207, and histidine 263. The active-site Proton acceptor is the aspartate 65.

This sequence belongs to the RNase Z family. In terms of assembly, homodimer. Zn(2+) serves as cofactor.

It carries out the reaction Endonucleolytic cleavage of RNA, removing extra 3' nucleotides from tRNA precursor, generating 3' termini of tRNAs. A 3'-hydroxy group is left at the tRNA terminus and a 5'-phosphoryl group is left at the trailer molecule.. Functionally, zinc phosphodiesterase, which displays some tRNA 3'-processing endonuclease activity. Probably involved in tRNA maturation, by removing a 3'-trailer from precursor tRNA. This chain is Ribonuclease Z, found in Thermococcus kodakarensis (strain ATCC BAA-918 / JCM 12380 / KOD1) (Pyrococcus kodakaraensis (strain KOD1)).